The primary structure comprises 195 residues: MAFVLSLLMALVLVSYGPGGSLGCYLSRKLMLDARENLKLLDRMNRLSPHSCLQDRKDFGLPQEMVEGDQLQKDQAFPVLYEMLQQSFNLFYTEHSSAAWDTTLLEQLCTGLQQQLDHLDTCRGQVMGEEDSELGNMDPIVTVKKYFQGIYDYLQEKGYSDCAWEIVRVEMMRALTVSTTLQKRLTKMGGDLNSP.

An N-terminal signal peptide occupies residues 1 to 23 (MAFVLSLLMALVLVSYGPGGSLG). 2 disulfides stabilise this stretch: Cys-24–Cys-122 and Cys-52–Cys-162.

Belongs to the alpha/beta interferon family. IFN-alphaII subfamily. As to expression, constitutively and exclusively expressed in the mononuclear cells of the extraembryonic trophectoderm.

It is found in the secreted. Functionally, paracrine hormone primarily responsible for maternal recognition of pregnancy. Interacts with endometrial receptors, probably type I interferon receptors, and blocks estrogen receptor expression, preventing the estrogen-induced increase in oxytocin receptor expression in the endometrium. This results in the suppression of the pulsatile endometrial release of the luteolytic hormone prostaglandin F2-alpha, hindering the regression of the corpus luteum (luteolysis) and therefore a return to ovarian cyclicity. This, and a possible direct effect of IFN-tau on prostaglandin synthesis, leads in turn to continued ovarian progesterone secretion, which stimulates the secretion by the endometrium of the nutrients required for the growth of the conceptus. In summary, displays particularly high antiviral and antiproliferative potency concurrently with particular weak cytotoxicity, high antiluteolytic activity and immunomodulatory properties. In contrast with other IFNs, IFN-tau is not virally inducible. This Ovis aries (Sheep) protein is Interferon tau-1 (IFNT1).